The chain runs to 281 residues: 4-diphosphocytidyl-2-C-methyl-D-erythritol kinase (281 aa).

K11 is an active-site residue. 92-102 (LVSAGLAGGSA) lines the ATP pocket. The active site involves D132.

The protein belongs to the GHMP kinase family. IspE subfamily.

The catalysed reaction is 4-CDP-2-C-methyl-D-erythritol + ATP = 4-CDP-2-C-methyl-D-erythritol 2-phosphate + ADP + H(+). It participates in isoprenoid biosynthesis; isopentenyl diphosphate biosynthesis via DXP pathway; isopentenyl diphosphate from 1-deoxy-D-xylulose 5-phosphate: step 3/6. Its function is as follows. Catalyzes the phosphorylation of the position 2 hydroxy group of 4-diphosphocytidyl-2C-methyl-D-erythritol. The polypeptide is 4-diphosphocytidyl-2-C-methyl-D-erythritol kinase (Ehrlichia ruminantium (strain Welgevonden)).